The sequence spans 277 residues: Probable redox regulatory protein ML2435 (277 aa).

This sequence belongs to the Rv0495c family.

Essential for maintaining intracellular redox homeostasis. The chain is Probable redox regulatory protein ML2435 from Mycobacterium leprae (strain TN).